We begin with the raw amino-acid sequence, 253 residues long: 5'/3'-nucleotidase SurE (253 aa).

Residues D8, D9, S39, and N92 each coordinate a divalent metal cation.

This sequence belongs to the SurE nucleotidase family. A divalent metal cation serves as cofactor.

The protein resides in the cytoplasm. The enzyme catalyses a ribonucleoside 5'-phosphate + H2O = a ribonucleoside + phosphate. The catalysed reaction is a ribonucleoside 3'-phosphate + H2O = a ribonucleoside + phosphate. It carries out the reaction [phosphate](n) + H2O = [phosphate](n-1) + phosphate + H(+). In terms of biological role, nucleotidase with a broad substrate specificity as it can dephosphorylate various ribo- and deoxyribonucleoside 5'-monophosphates and ribonucleoside 3'-monophosphates with highest affinity to 3'-AMP. Also hydrolyzes polyphosphate (exopolyphosphatase activity) with the preference for short-chain-length substrates (P20-25). Might be involved in the regulation of dNTP and NTP pools, and in the turnover of 3'-mononucleotides produced by numerous intracellular RNases (T1, T2, and F) during the degradation of various RNAs. The polypeptide is 5'/3'-nucleotidase SurE (Escherichia coli O17:K52:H18 (strain UMN026 / ExPEC)).